Consider the following 291-residue polypeptide: ATP synthase gamma chain (291 aa).

Belongs to the ATPase gamma chain family. As to quaternary structure, F-type ATPases have 2 components, CF(1) - the catalytic core - and CF(0) - the membrane proton channel. CF(1) has five subunits: alpha(3), beta(3), gamma(1), delta(1), epsilon(1). CF(0) has three main subunits: a, b and c.

The protein resides in the cell inner membrane. In terms of biological role, produces ATP from ADP in the presence of a proton gradient across the membrane. The gamma chain is believed to be important in regulating ATPase activity and the flow of protons through the CF(0) complex. This Neisseria meningitidis serogroup C (strain 053442) protein is ATP synthase gamma chain.